Here is a 179-residue protein sequence, read N- to C-terminus: Large ribosomal subunit protein uL5 (179 aa).

The residue at position 3 (Lys3) is an N6-acetyllysine.

Belongs to the universal ribosomal protein uL5 family. In terms of assembly, part of the 50S ribosomal subunit; part of the 5S rRNA/L5/L18/L25 subcomplex. Contacts the 5S rRNA and the P site tRNA. Forms a bridge to the 30S subunit in the 70S ribosome.

Functionally, this is one of the proteins that bind and probably mediate the attachment of the 5S RNA into the large ribosomal subunit, where it forms part of the central protuberance. In the 70S ribosome it contacts protein S13 of the 30S subunit (bridge B1b), connecting the 2 subunits; this bridge is implicated in subunit movement. Contacts the P site tRNA; the 5S rRNA and some of its associated proteins might help stabilize positioning of ribosome-bound tRNAs. The sequence is that of Large ribosomal subunit protein uL5 from Escherichia coli O45:K1 (strain S88 / ExPEC).